The primary structure comprises 91 residues: Lipolysis-activating peptide 1-alpha chain (91 aa).

The signal sequence occupies residues 1 to 22; that stretch reads MMKLVLFGIIVILFSLIGSIHG. Residues 24 to 87 enclose the LCN-type CS-alpha/beta domain; sequence SGNYPLNPYG…VWNAVKKHCK (64 aa). 3 cysteine pairs are disulfide-bonded: Cys38–Cys61, Cys47–Cys66, and Cys51–Cys68.

This sequence belongs to the long (3 C-C) scorpion toxin superfamily. Monomer (edited version) and heterodimer (non-edited version) of this alpha chain and a beta chain (AC P84809). Expressed by the venom gland.

The protein localises to the secreted. Its function is as follows. The heterodimer non-edited LVP1 induces lipolysis in rat adipocytes. Induction of lipolysis by LVP1 appears to be mediated through the beta-2 adrenergic receptor pathway (ADRB2). Intracerebroventricular injection is not toxic to mice. In terms of biological role, the edited BmKBTx-like, similar to beta-toxins, may modulate voltage-gated sodium channels (Nav) and may block voltage-gated potassium channels (Kv). In Buthus occitanus tunetanus (Common European scorpion), this protein is Lipolysis-activating peptide 1-alpha chain.